The sequence spans 184 residues: Ethylene-responsive transcription factor ERF010 (184 aa).

A DNA-binding region (AP2/ERF) is located at residues 20–77 (PYKGIRMRKWGKWVAEIREPNKRSRLWLGSYSTPEAAARAYDTAVFYLRGPTARLNFP). Residues 123 to 184 (QNRDSDVDNK…SSDEEWESKH (62 aa)) form a disordered region. Residues 161–172 (LLDRVDLNKLPD) show a composition bias toward basic and acidic residues. The span at 174–184 (ESSDEEWESKH) shows a compositional bias: acidic residues.

The protein belongs to the AP2/ERF transcription factor family. ERF subfamily.

The protein resides in the nucleus. In terms of biological role, probably acts as a transcriptional activator. Binds to the GCC-box pathogenesis-related promoter element. May be involved in the regulation of gene expression by stress factors and by components of stress signal transduction pathways. This Arabidopsis thaliana (Mouse-ear cress) protein is Ethylene-responsive transcription factor ERF010 (ERF010).